The primary structure comprises 523 residues: 2-isopropylmalate synthase (523 aa).

One can recognise a Pyruvate carboxyltransferase domain in the interval 5–267 (VIIFDTTLRD…HTNINHHEIW (263 aa)). Mn(2+) is bound by residues Asp-14, His-202, His-204, and Asn-238. The segment at 392 to 523 (RLDYFSVQSG…QNKENNKETV (132 aa)) is regulatory domain.

Belongs to the alpha-IPM synthase/homocitrate synthase family. LeuA type 1 subfamily. As to quaternary structure, homodimer. Requires Mn(2+) as cofactor.

It is found in the cytoplasm. The enzyme catalyses 3-methyl-2-oxobutanoate + acetyl-CoA + H2O = (2S)-2-isopropylmalate + CoA + H(+). Its pathway is amino-acid biosynthesis; L-leucine biosynthesis; L-leucine from 3-methyl-2-oxobutanoate: step 1/4. Its function is as follows. Catalyzes the condensation of the acetyl group of acetyl-CoA with 3-methyl-2-oxobutanoate (2-ketoisovalerate) to form 3-carboxy-3-hydroxy-4-methylpentanoate (2-isopropylmalate). This chain is 2-isopropylmalate synthase, found in Klebsiella pneumoniae (strain 342).